Reading from the N-terminus, the 428-residue chain is Kynureninase (428 aa).

Residues threonine 104, threonine 105, phenylalanine 132–aspartate 135, aspartate 213, histidine 216, and tyrosine 238 each bind pyridoxal 5'-phosphate. At lysine 239 the chain carries N6-(pyridoxal phosphate)lysine. Pyridoxal 5'-phosphate is bound by residues tryptophan 267 and threonine 295.

Belongs to the kynureninase family. Homodimer. It depends on pyridoxal 5'-phosphate as a cofactor.

It carries out the reaction L-kynurenine + H2O = anthranilate + L-alanine + H(+). The enzyme catalyses 3-hydroxy-L-kynurenine + H2O = 3-hydroxyanthranilate + L-alanine + H(+). Its pathway is amino-acid degradation; L-kynurenine degradation; L-alanine and anthranilate from L-kynurenine: step 1/1. The protein operates within cofactor biosynthesis; NAD(+) biosynthesis; quinolinate from L-kynurenine: step 2/3. Functionally, catalyzes the cleavage of L-kynurenine (L-Kyn) and L-3-hydroxykynurenine (L-3OHKyn) into anthranilic acid (AA) and 3-hydroxyanthranilic acid (3-OHAA), respectively. The protein is Kynureninase of Bacillus cereus (strain ATCC 10987 / NRS 248).